We begin with the raw amino-acid sequence, 93 residues long: Small ribosomal subunit protein uS19 (93 aa).

It belongs to the universal ribosomal protein uS19 family.

Its function is as follows. Protein S19 forms a complex with S13 that binds strongly to the 16S ribosomal RNA. The chain is Small ribosomal subunit protein uS19 from Latilactobacillus sakei subsp. sakei (strain 23K) (Lactobacillus sakei subsp. sakei).